Here is a 101-residue protein sequence, read N- to C-terminus: MEPVDPSLEPWKHPGSQPKTACTNCYCKKCCLHCQVCFTTKGLGISYGRKKRRQRRRPPQDSQTHQVSLPKQPSSQQRGDPTGPKESKKKVERETETDPDN.

The segment at 1 to 20 (MEPVDPSLEPWKHPGSQPKT) is disordered. The interval 1–24 (MEPVDPSLEPWKHPGSQPKTACTN) is interaction with human CREBBP. Residues 1–48 (MEPVDPSLEPWKHPGSQPKTACTNCYCKKCCLHCQVCFTTKGLGISYG) form a transactivation region. Residues Cys22, Cys25, and Cys27 each coordinate Zn(2+). A cysteine-rich region spans residues 22-37 (CTNCYCKKCCLHCQVC). Position 28 is an N6-acetyllysine; by host PCAF (Lys28). Cys30, His33, Cys34, and Cys37 together coordinate Zn(2+). Residues 38-48 (FTTKGLGISYG) form a core region. The interval 45–101 (ISYGRKKRRQRRRPPQDSQTHQVSLPKQPSSQQRGDPTGPKESKKKVERETETDPDN) is disordered. Positions 48–57 (GRKKRRQRRR) are enriched in basic residues. The short motif at 49–57 (RKKRRQRRR) is the Nuclear localization signal, RNA-binding (TAR), and protein transduction element. An interaction with the host capping enzyme RNGTT region spans residues 49–86 (RKKRRQRRRPPQDSQTHQVSLPKQPSSQQRGDPTGPKE). 2 positions are modified to N6-acetyllysine; by host EP300 and GCN5L2: Lys50 and Lys51. Asymmetric dimethylarginine; by host PRMT6 occurs at positions 52 and 53. Polar residues predominate over residues 61–79 (DSQTHQVSLPKQPSSQQRG). Residue Lys71 forms a Glycyl lysine isopeptide (Lys-Gly) (interchain with G-Cter in ubiquitin) linkage. The Cell attachment site motif lies at 78–80 (RGD). Over residues 83-101 (GPKESKKKVERETETDPDN) the composition is skewed to basic and acidic residues.

It belongs to the lentiviruses Tat family. In terms of assembly, interacts with host CCNT1. Associates with the P-TEFb complex composed at least of Tat, P-TEFb (CDK9 and CCNT1), TAR RNA, RNA Pol II. Recruits the HATs CREBBP, TAF1/TFIID, EP300, PCAF and GCN5L2. Interacts with host KAT5/Tip60; this interaction targets the latter to degradation. Interacts with the host deacetylase SIRT1. Interacts with host capping enzyme RNGTT; this interaction stimulates RNGTT. Binds to host KDR, and to the host integrins ITGAV/ITGB3 and ITGA5/ITGB1. Interacts with host KPNB1/importin beta-1 without previous binding to KPNA1/importin alpha-1. Interacts with EIF2AK2. Interacts with host nucleosome assembly protein NAP1L1; this interaction may be required for the transport of Tat within the nucleus, since the two proteins interact at the nuclear rim. Interacts with host C1QBP/SF2P32; this interaction involves lysine-acetylated Tat. Interacts with the host chemokine receptors CCR2, CCR3 and CXCR4. Interacts with host DPP4/CD26; this interaction may trigger an anti-proliferative effect. Interacts with host LDLR. Interacts with the host extracellular matrix metalloproteinase MMP1. Interacts with host PRMT6; this interaction mediates Tat's methylation. Interacts with, and is ubiquitinated by MDM2/Hdm2. Interacts with host PSMC3 and HTATIP2. Interacts with STAB1; this interaction may overcome SATB1-mediated repression of IL2 and IL2RA (interleukin) in T cells by binding to the same domain than HDAC1. Interacts (when acetylated) with human CDK13, thereby increasing HIV-1 mRNA splicing and promoting the production of the doubly spliced HIV-1 protein Nef. Interacts with host TBP; this interaction modulates the activity of transcriptional pre-initiation complex. Interacts with host RELA. Interacts with host PLSCR1; this interaction negatively regulates Tat transactivation activity by altering its subcellular distribution. Post-translationally, asymmetrical arginine methylation by host PRMT6 seems to diminish the transactivation capacity of Tat and affects the interaction with host CCNT1. Acetylation by EP300, CREBBP, GCN5L2/GCN5 and PCAF regulates the transactivation activity of Tat. EP300-mediated acetylation of Lys-50 promotes dissociation of Tat from the TAR RNA through the competitive binding to PCAF's bromodomain. In addition, the non-acetylated Tat's N-terminus can also interact with PCAF. PCAF-mediated acetylation of Lys-28 enhances Tat's binding to CCNT1. Lys-50 is deacetylated by SIRT1. In terms of processing, polyubiquitination by host MDM2 does not target Tat to degradation, but activates its transactivation function and fosters interaction with CCNT1 and TAR RNA. Post-translationally, phosphorylated by EIF2AK2 on serine and threonine residues adjacent to the basic region important for TAR RNA binding and function. Phosphorylation of Tat by EIF2AK2 is dependent on the prior activation of EIF2AK2 by dsRNA.

It localises to the host nucleus. Its subcellular location is the host nucleolus. The protein localises to the host cytoplasm. The protein resides in the secreted. Its function is as follows. Transcriptional activator that increases RNA Pol II processivity, thereby increasing the level of full-length viral transcripts. Recognizes a hairpin structure at the 5'-LTR of the nascent viral mRNAs referred to as the transactivation responsive RNA element (TAR) and recruits the cyclin T1-CDK9 complex (P-TEFb complex) that will in turn hyperphosphorylate the RNA polymerase II to allow efficient elongation. The CDK9 component of P-TEFb and other Tat-activated kinases hyperphosphorylate the C-terminus of RNA Pol II that becomes stabilized and much more processive. Other factors such as HTATSF1/Tat-SF1, SUPT5H/SPT5, and HTATIP2 are also important for Tat's function. Besides its effect on RNA Pol II processivity, Tat induces chromatin remodeling of proviral genes by recruiting the histone acetyltransferases (HATs) CREBBP, EP300 and PCAF to the chromatin. This also contributes to the increase in proviral transcription rate, especially when the provirus integrates in transcriptionally silent region of the host genome. To ensure maximal activation of the LTR, Tat mediates nuclear translocation of NF-kappa-B by interacting with host RELA. Through its interaction with host TBP, Tat may also modulate transcription initiation. Tat can reactivate a latently infected cell by penetrating in it and transactivating its LTR promoter. In the cytoplasm, Tat is thought to act as a translational activator of HIV-1 mRNAs. In terms of biological role, extracellular circulating Tat can be endocytosed by surrounding uninfected cells via the binding to several surface receptors such as CD26, CXCR4, heparan sulfate proteoglycans (HSPG) or LDLR. Neurons are rarely infected, but they internalize Tat via their LDLR. Through its interaction with nuclear HATs, Tat is potentially able to control the acetylation-dependent cellular gene expression. Modulates the expression of many cellular genes involved in cell survival, proliferation or in coding for cytokines or cytokine receptors. Tat plays a role in T-cell and neurons apoptosis. Tat induced neurotoxicity and apoptosis probably contribute to neuroAIDS. Circulating Tat also acts as a chemokine-like and/or growth factor-like molecule that binds to specific receptors on the surface of the cells, affecting many cellular pathways. In the vascular system, Tat binds to ITGAV/ITGB3 and ITGA5/ITGB1 integrins dimers at the surface of endothelial cells and competes with bFGF for heparin-binding sites, leading to an excess of soluble bFGF. The chain is Protein Tat from Homo sapiens (Human).